The chain runs to 104 residues: L-rhamnose mutarotase (104 aa).

Tyr-18 serves as a coordination point for substrate. The active-site Proton donor is His-22. Residues Tyr-41 and 76 to 77 (WW) each bind substrate.

This sequence belongs to the rhamnose mutarotase family. As to quaternary structure, homodimer.

It localises to the cytoplasm. It carries out the reaction alpha-L-rhamnose = beta-L-rhamnose. Its pathway is carbohydrate metabolism; L-rhamnose metabolism. Functionally, involved in the anomeric conversion of L-rhamnose. This Sinorhizobium medicae (strain WSM419) (Ensifer medicae) protein is L-rhamnose mutarotase.